We begin with the raw amino-acid sequence, 271 residues long: Histone chaperone asf-1 (271 aa).

The interval 152 to 271 (KWDSEASAPP…PKQQGMAMAQ (120 aa)) is disordered. 2 stretches are compositionally biased toward acidic residues: residues 168–185 (PEAD…DELA) and 211–258 (IEED…EMEI).

It belongs to the ASF1 family. As to quaternary structure, interacts with histone H3 and histone H4.

Its subcellular location is the nucleus. Histone chaperone that facilitates histone deposition and histone exchange and removal during nucleosome assembly and disassembly. In Neurospora crassa (strain ATCC 24698 / 74-OR23-1A / CBS 708.71 / DSM 1257 / FGSC 987), this protein is Histone chaperone asf-1 (asf-1).